Consider the following 509-residue polypeptide: Cardiolipin synthase 1 (509 aa).

A run of 3 helical transmembrane segments spans residues 4 to 24 (PIVQ…LLNT), 30 to 50 (YTFV…VIFI), and 59 to 79 (LAWF…YAIF). PLD phosphodiesterase domains follow at residues 238-265 (VNYR…GDEY) and 422-449 (KDGF…DVRS). Active-site residues include His243, Lys245, Asp250, His427, Lys429, and Asp434.

This sequence belongs to the phospholipase D family. Cardiolipin synthase subfamily.

It localises to the cell membrane. It catalyses the reaction 2 a 1,2-diacyl-sn-glycero-3-phospho-(1'-sn-glycerol) = a cardiolipin + glycerol. Its function is as follows. Catalyzes the reversible phosphatidyl group transfer from one phosphatidylglycerol molecule to another to form cardiolipin (CL) (diphosphatidylglycerol) and glycerol. The protein is Cardiolipin synthase 1 (cls1) of Bacillus cereus (strain ATCC 14579 / DSM 31 / CCUG 7414 / JCM 2152 / NBRC 15305 / NCIMB 9373 / NCTC 2599 / NRRL B-3711).